Reading from the N-terminus, the 1392-residue chain is DNA-directed RNA polymerase subunit beta (1392 aa).

It belongs to the RNA polymerase beta chain family. As to quaternary structure, the RNAP catalytic core consists of 2 alpha, 1 beta, 1 beta' and 1 omega subunit. When a sigma factor is associated with the core the holoenzyme is formed, which can initiate transcription.

The enzyme catalyses RNA(n) + a ribonucleoside 5'-triphosphate = RNA(n+1) + diphosphate. Functionally, DNA-dependent RNA polymerase catalyzes the transcription of DNA into RNA using the four ribonucleoside triphosphates as substrates. This chain is DNA-directed RNA polymerase subunit beta, found in Neisseria meningitidis serogroup B (strain ATCC BAA-335 / MC58).